Reading from the N-terminus, the 274-residue chain is MTVRKNQATLTADEKRRFVAAVLELKRSGRYDEFVTTHNAFIIGDTDAGERTGHRSPSFLPWHRRYLLEFERALQSVDASVALPYWDWSADRTARASLWAPDFLGGTGRSLDGRVMDGPFAASAGNWPINVRVDGRAYLRRSLGTAVRELPTRAEVESVLGMATYDTAPWNSASDGFRNHLEGWRGVNLHNRVHVWVGGQMATGMSPNDPVFWLHHAYVDKLWAEWQRRHPGSGYLPAAGTPDVVDLNDRMKPWNDTSPADLLDHTAHYTFDTD.

6 residues coordinate Cu cation: His38, His54, His63, His190, His194, and His216.

It belongs to the tyrosinase family. Cu(2+) is required as a cofactor.

The enzyme catalyses 2 L-dopa + O2 = 2 L-dopaquinone + 2 H2O. The catalysed reaction is L-tyrosine + O2 = L-dopaquinone + H2O. This is a copper-containing oxidase that functions in the formation of pigments such as melanins and other polyphenolic compounds. The protein is Tyrosinase (melC2) of Streptomyces glaucescens.